We begin with the raw amino-acid sequence, 360 residues long: Peptide chain release factor 1 (360 aa).

Gln235 carries the N5-methylglutamine modification. Positions 285–304 (KRQQEEASTRRNLLGSGDRS) are disordered.

Belongs to the prokaryotic/mitochondrial release factor family. Methylated by PrmC. Methylation increases the termination efficiency of RF1.

It is found in the cytoplasm. Functionally, peptide chain release factor 1 directs the termination of translation in response to the peptide chain termination codons UAG and UAA. This Edwardsiella ictaluri (strain 93-146) protein is Peptide chain release factor 1.